The following is a 315-amino-acid chain: Tyrosine recombinase XerC (315 aa).

Residues 14–105 (PDLLNERQSW…GLRSLLHHLQ (92 aa)) enclose the Core-binding (CB) domain. The region spanning 126–309 (SLPKPLTDRQ…DTARLLEIYD (184 aa)) is the Tyr recombinase domain. Catalysis depends on residues arginine 169, lysine 193, histidine 261, arginine 264, and histidine 287. Tyrosine 296 serves as the catalytic O-(3'-phospho-DNA)-tyrosine intermediate.

The protein belongs to the 'phage' integrase family. XerC subfamily. Forms a cyclic heterotetrameric complex composed of two molecules of XerC and two molecules of XerD.

The protein resides in the cytoplasm. Its function is as follows. Site-specific tyrosine recombinase, which acts by catalyzing the cutting and rejoining of the recombining DNA molecules. The XerC-XerD complex is essential to convert dimers of the bacterial chromosome into monomers to permit their segregation at cell division. It also contributes to the segregational stability of plasmids. The chain is Tyrosine recombinase XerC from Agrobacterium fabrum (strain C58 / ATCC 33970) (Agrobacterium tumefaciens (strain C58)).